Here is a 579-residue protein sequence, read N- to C-terminus: Aspartate--tRNA(Asp/Asn) ligase (579 aa).

Residue Glu171 coordinates L-aspartate. Residues Gln195 to Lys198 form an aspartate region. Position 217 (Arg217) interacts with L-aspartate. Residues Arg217–Glu219 and Gln226 each bind ATP. His444 is an L-aspartate binding site. Glu475 contributes to the ATP binding site. Arg482 contacts L-aspartate. Gly527–Arg530 contacts ATP.

This sequence belongs to the class-II aminoacyl-tRNA synthetase family. Type 1 subfamily. As to quaternary structure, homodimer.

The protein resides in the cytoplasm. The enzyme catalyses tRNA(Asx) + L-aspartate + ATP = L-aspartyl-tRNA(Asx) + AMP + diphosphate. Aspartyl-tRNA synthetase with relaxed tRNA specificity since it is able to aspartylate not only its cognate tRNA(Asp) but also tRNA(Asn). Reaction proceeds in two steps: L-aspartate is first activated by ATP to form Asp-AMP and then transferred to the acceptor end of tRNA(Asp/Asn). This chain is Aspartate--tRNA(Asp/Asn) ligase, found in Thermotoga neapolitana (strain ATCC 49049 / DSM 4359 / NBRC 107923 / NS-E).